The sequence spans 359 residues: 5-amino-6-(D-ribitylamino)uracil--L-tyrosine 4-hydroxyphenyl transferase (359 aa).

The region spanning 45–282 is the Radical SAM core domain; the sequence is VTYVVNANIN…TYAVSRIFFK (238 aa). Residues cysteine 59, cysteine 63, and cysteine 66 each coordinate [4Fe-4S] cluster.

Belongs to the radical SAM superfamily. CofH family. As to quaternary structure, consists of two subunits, CofG and CofH. Requires [4Fe-4S] cluster as cofactor.

The enzyme catalyses 5-amino-6-(D-ribitylamino)uracil + L-tyrosine + S-adenosyl-L-methionine = 5-amino-5-(4-hydroxybenzyl)-6-(D-ribitylimino)-5,6-dihydrouracil + 2-iminoacetate + 5'-deoxyadenosine + L-methionine + H(+). It participates in cofactor biosynthesis; coenzyme F0 biosynthesis. Its function is as follows. Catalyzes the radical-mediated synthesis of 5-amino-5-(4-hydroxybenzyl)-6-(D-ribitylimino)-5,6-dihydrouracil from 5-amino-6-(D-ribitylamino)uracil and L-tyrosine. This is 5-amino-6-(D-ribitylamino)uracil--L-tyrosine 4-hydroxyphenyl transferase from Methanococcus maripaludis (strain C6 / ATCC BAA-1332).